The sequence spans 277 residues: Diaminopimelate epimerase (277 aa).

Positions 11 and 72 each coordinate substrate. Catalysis depends on C81, which acts as the Proton donor. Substrate contacts are provided by residues 82–83, N189, and 207–208; these read GN and ER. The active-site Proton acceptor is the C217. Residue 218-219 participates in substrate binding; the sequence is GT.

Belongs to the diaminopimelate epimerase family. Homodimer.

The protein resides in the cytoplasm. The catalysed reaction is (2S,6S)-2,6-diaminopimelate = meso-2,6-diaminopimelate. It functions in the pathway amino-acid biosynthesis; L-lysine biosynthesis via DAP pathway; DL-2,6-diaminopimelate from LL-2,6-diaminopimelate: step 1/1. Its function is as follows. Catalyzes the stereoinversion of LL-2,6-diaminopimelate (L,L-DAP) to meso-diaminopimelate (meso-DAP), a precursor of L-lysine and an essential component of the bacterial peptidoglycan. The sequence is that of Diaminopimelate epimerase from Hydrogenobaculum sp. (strain Y04AAS1).